The primary structure comprises 210 residues: Thiamine-phosphate synthase (210 aa).

Residues 34-38 and asparagine 66 contribute to the 4-amino-2-methyl-5-(diphosphooxymethyl)pyrimidine site; that span reads QLRHK. The Mg(2+) site is built by aspartate 67 and aspartate 86. Serine 105 is a 4-amino-2-methyl-5-(diphosphooxymethyl)pyrimidine binding site. Residue 131–133 participates in 2-[(2R,5Z)-2-carboxy-4-methylthiazol-5(2H)-ylidene]ethyl phosphate binding; sequence TSS. Lysine 134 is a binding site for 4-amino-2-methyl-5-(diphosphooxymethyl)pyrimidine. Glycine 162 contributes to the 2-[(2R,5Z)-2-carboxy-4-methylthiazol-5(2H)-ylidene]ethyl phosphate binding site.

The protein belongs to the thiamine-phosphate synthase family. Mg(2+) is required as a cofactor.

The enzyme catalyses 2-[(2R,5Z)-2-carboxy-4-methylthiazol-5(2H)-ylidene]ethyl phosphate + 4-amino-2-methyl-5-(diphosphooxymethyl)pyrimidine + 2 H(+) = thiamine phosphate + CO2 + diphosphate. It catalyses the reaction 2-(2-carboxy-4-methylthiazol-5-yl)ethyl phosphate + 4-amino-2-methyl-5-(diphosphooxymethyl)pyrimidine + 2 H(+) = thiamine phosphate + CO2 + diphosphate. The catalysed reaction is 4-methyl-5-(2-phosphooxyethyl)-thiazole + 4-amino-2-methyl-5-(diphosphooxymethyl)pyrimidine + H(+) = thiamine phosphate + diphosphate. It participates in cofactor biosynthesis; thiamine diphosphate biosynthesis; thiamine phosphate from 4-amino-2-methyl-5-diphosphomethylpyrimidine and 4-methyl-5-(2-phosphoethyl)-thiazole: step 1/1. Condenses 4-methyl-5-(beta-hydroxyethyl)thiazole monophosphate (THZ-P) and 2-methyl-4-amino-5-hydroxymethyl pyrimidine pyrophosphate (HMP-PP) to form thiamine monophosphate (TMP). This chain is Thiamine-phosphate synthase, found in Chlorobium limicola (strain DSM 245 / NBRC 103803 / 6330).